Consider the following 518-residue polypeptide: Circadian clock oscillator protein KaiC (518 aa).

The KaiC 1 domain maps to 1–247 (MTNLPEHQSS…FTINNGINIF (247 aa)). Positions 49, 50, 51, 52, 53, 54, and 55 each coordinate ATP. T54 contacts Mg(2+). E78 acts as the Proton acceptor in CI (KaiC 1) in catalysis. Residue S90 coordinates ATP. The B-loop, required to bind KaiB and SasA stretch occupies residues 116–123 (QEVAGDFD). ATP is bound by residues K225, L226, R227, T229, and H231. Residues 248-260 (PLGAMRLTQRSSN) form a linker region. Positions 261–518 (VRVSSGVKTL…AKGMQDLESE (258 aa)) constitute a KaiC 2 domain. ATP is bound by residues T290, G291, T292, G293, K294, T295, and L296. T295 contributes to the Mg(2+) binding site. E318 is a Mg(2+) binding site. The Proton acceptor in CII (KaiC 2) role is filled by E318. Position 331 (W331) interacts with ATP. S431 carries the post-translational modification Phosphoserine; by autocatalysis. T432 is modified (phosphothreonine; by autocatalysis). Residues R451, K457, M458, R459, S461, H463, and K465 each contribute to the ATP site. Positions 488-497 (GIISGTPTRI) are A-loop, interacts with KaiA.

The protein belongs to the KaiC family. As to quaternary structure, homohexamer resembling 2 stacked donuts rings with a central pore nearly blocked on one side; hexamerization is dependent on ATP-binding. Binds 2 ATP per monomer, at the subunit interface on each ring. The KaiABC complex composition changes during the circadian cycle to control KaiC phosphorylation. Complexes KaiC(6), KaiA(2-4):KaiC(6), KaiB(6):KaiC(6) and KaiC(6):KaiB(6):KaiA(12) are among the most important forms, many form cooperatively. Interacts with SasA, probably as 1 SasA trimer:1 KaiC homohexamer, has highest affinity for unphosphorylated SasA. The CI domain binds to KaiB and SasA; as they have a similar fold they compete for the same site on CI. KaiB assumes a thioredoxin-like form called KaiB(fs) when bound to KaiC. It depends on Mg(2+) as a cofactor. Phosphorylated on serine/threonine residues by autocatalysis. Both phosphorylated and unphosphorylated forms exist. Both autophosphorylates and autodephosphorylates. Phosphorylated form correlates with clock speed. In terms of processing, phosphorylated on serine and threonine residues by autocatalysis. Has a 4 step phosphorylation cycle; the autokinase acts first on Thr-432, then Ser-431. When Ser-431 is modified KaiC switches to an autophosphatase mode, acting first on phospho-Thr-432 then phospho-Ser-431.

The catalysed reaction is L-seryl-[protein] + ATP = O-phospho-L-seryl-[protein] + ADP + H(+). It carries out the reaction L-threonyl-[protein] + ATP = O-phospho-L-threonyl-[protein] + ADP + H(+). The enzyme catalyses ATP + H2O = ADP + phosphate + H(+). Its activity is regulated as follows. The interaction with KaiA enhances its phosphorylation status, while the interaction with KaiB decreases it. Central component of the KaiABC oscillator complex, which constitutes the main circadian regulator in cyanobacteria. Complex composition changes during the circadian cycle to control KaiC phosphorylation. KaiA stimulates KaiC autophosphorylation, while KaiB sequesters KaiA, leading to KaiC autodephosphorylation. Clock output pathways impact the RpaA transcriptional regulator. KaiC enhances the autophosphorylation activity of SasA, which then transfers its phosphate group to RpaA to activate it. KaiB and KaiC together enhance the phospho-RpaA dephosphatase activity of CikA. Its function is as follows. Stimulates SasA autophosphorylation. Fully phosphorylated KaiC (tested with phosphomimetic Asp-431-432-Asp) is the best stimulant, requires the ATPase activity of the CII domain. Unphosphorylated SasA associates with KaiC and its autophosphorylation activity is enhanced. Phospho-SasA is released and associates with RpaA, transferring its phosphate group. Formation of the KaiA:KaiB complex is promoted by KaiC, helping switch KaiC from its autophosphorylation to autodephosphatase function. In terms of biological role, has a weak, temperature-independent ATPase activity (about 14 molecules of ATP per day) that defines the circadian period. ATPase activity is mostly contributed by the CI domain; the CII domain augments the activity. The addition of KaiA increases activity. ATPase is inhibited during the KaiC phosphorylating phase and activated during the KaiC dephosphorylating phase. The polypeptide is Circadian clock oscillator protein KaiC (Thermosynechococcus vestitus (strain NIES-2133 / IAM M-273 / BP-1)).